Consider the following 282-residue polypeptide: 2-dehydro-3-deoxyphosphooctonate aldolase (282 aa).

This sequence belongs to the KdsA family.

Its subcellular location is the cytoplasm. It catalyses the reaction D-arabinose 5-phosphate + phosphoenolpyruvate + H2O = 3-deoxy-alpha-D-manno-2-octulosonate-8-phosphate + phosphate. It participates in carbohydrate biosynthesis; 3-deoxy-D-manno-octulosonate biosynthesis; 3-deoxy-D-manno-octulosonate from D-ribulose 5-phosphate: step 2/3. It functions in the pathway bacterial outer membrane biogenesis; lipopolysaccharide biosynthesis. This is 2-dehydro-3-deoxyphosphooctonate aldolase from Shewanella sediminis (strain HAW-EB3).